The following is a 432-amino-acid chain: Adenylosuccinate synthetase (432 aa).

Residues 13–19 (GDEGKGK) and 41–43 (GHT) contribute to the GTP site. Aspartate 14 serves as the catalytic Proton acceptor. Positions 14 and 41 each coordinate Mg(2+). Residues 14–17 (DEGK), 39–42 (NAGH), threonine 130, arginine 144, glutamine 225, threonine 240, and arginine 304 each bind IMP. Histidine 42 acts as the Proton donor in catalysis. Residue 300-306 (ATTGRKR) coordinates substrate. GTP-binding positions include arginine 306, 332-334 (KLD), and 415-417 (STG).

Belongs to the adenylosuccinate synthetase family. Homodimer. Mg(2+) is required as a cofactor.

The protein resides in the cytoplasm. The catalysed reaction is IMP + L-aspartate + GTP = N(6)-(1,2-dicarboxyethyl)-AMP + GDP + phosphate + 2 H(+). It participates in purine metabolism; AMP biosynthesis via de novo pathway; AMP from IMP: step 1/2. In terms of biological role, plays an important role in the de novo pathway of purine nucleotide biosynthesis. Catalyzes the first committed step in the biosynthesis of AMP from IMP. The sequence is that of Adenylosuccinate synthetase from Tolumonas auensis (strain DSM 9187 / NBRC 110442 / TA 4).